The chain runs to 608 residues: Elongation factor 4 (608 aa).

Residues 11-193 (SHIRNFSIVA…AIVHKLPAPK (183 aa)) form the tr-type G domain. Residues 23-28 (DHGKST) and 140-143 (NKID) each bind GTP.

It belongs to the TRAFAC class translation factor GTPase superfamily. Classic translation factor GTPase family. LepA subfamily.

The protein localises to the cell inner membrane. The enzyme catalyses GTP + H2O = GDP + phosphate + H(+). Functionally, required for accurate and efficient protein synthesis under certain stress conditions. May act as a fidelity factor of the translation reaction, by catalyzing a one-codon backward translocation of tRNAs on improperly translocated ribosomes. Back-translocation proceeds from a post-translocation (POST) complex to a pre-translocation (PRE) complex, thus giving elongation factor G a second chance to translocate the tRNAs correctly. Binds to ribosomes in a GTP-dependent manner. This Rhizobium meliloti (strain 1021) (Ensifer meliloti) protein is Elongation factor 4.